A 65-amino-acid polypeptide reads, in one-letter code: Movement protein TGBp3 (65 aa).

Topologically, residues 1–6 (MLPKMQ) are lumenal. Residues 7–26 (PSAQCLIVFSLAFVLGWYVL) form a helical membrane-spanning segment. The Cytoplasmic segment spans residues 27-65 (RPGNTSCVLLITGESVRLVNCELTKDLVEAVLLRPLKHL).

This sequence belongs to the Tymovirales TGBp3 protein family.

The protein resides in the host endoplasmic reticulum membrane. Plays a role in viral cell-to-cell propagation, by facilitating genome transport to neighboring plant cells through plasmosdesmata. May induce the formation of granular vesicles derived from the Endoplasmic reticulum, which align on actin filaments. This is Movement protein TGBp3 from Potato virus S (strain Peruvian).